We begin with the raw amino-acid sequence, 321 residues long: Glucokinase (321 aa).

Residue 8-13 (GDVGGT) participates in ATP binding.

Belongs to the bacterial glucokinase family.

It is found in the cytoplasm. The enzyme catalyses D-glucose + ATP = D-glucose 6-phosphate + ADP + H(+). The protein is Glucokinase of Salmonella agona (strain SL483).